Reading from the N-terminus, the 590-residue chain is Aspartate--tRNA(Asp/Asn) ligase (590 aa).

Residue Glu-172 participates in L-aspartate binding. The interval 196–199 is aspartate; it reads QLFK. An L-aspartate-binding site is contributed by Arg-218. ATP-binding positions include 218–220 and Gln-227; that span reads RDE. His-449 is a binding site for L-aspartate. Residue Glu-484 coordinates ATP. Arg-491 contributes to the L-aspartate binding site. 536 to 539 contributes to the ATP binding site; it reads GVDR.

It belongs to the class-II aminoacyl-tRNA synthetase family. Type 1 subfamily. In terms of assembly, homodimer.

Its subcellular location is the cytoplasm. It catalyses the reaction tRNA(Asx) + L-aspartate + ATP = L-aspartyl-tRNA(Asx) + AMP + diphosphate. Its function is as follows. Aspartyl-tRNA synthetase with relaxed tRNA specificity since it is able to aspartylate not only its cognate tRNA(Asp) but also tRNA(Asn). Reaction proceeds in two steps: L-aspartate is first activated by ATP to form Asp-AMP and then transferred to the acceptor end of tRNA(Asp/Asn). This chain is Aspartate--tRNA(Asp/Asn) ligase, found in Francisella tularensis subsp. holarctica (strain FTNF002-00 / FTA).